The following is a 1311-amino-acid chain: Cyclin-G-associated kinase (1311 aa).

The residue at position 2 (serine 2) is an N-acetylserine. Residues serine 2 and serine 16 each carry the phosphoserine modification. The region spanning 40–314 (LRVRRVLAEG…SIAEVVHQLQ (275 aa)) is the Protein kinase domain. Residue aspartate 173 is the Proton acceptor of the active site. The region spanning 399–566 (SVANYAKGDL…EYMCDMVAEE (168 aa)) is the Phosphatase tensin-type domain. Serine 456 is subject to Phosphoserine. One can recognise a C2 tensin-type domain in the interval 572-710 (SKPILVRAVV…FQVNLEVEVE (139 aa)). 2 disordered regions span residues 709-729 (VEPRDRPSREAPPWENSSMRG) and 749-788 (FGKPELPRQPGSTAQYDAGAGSPEAEPTDSDSPPSSSADA). Serine 770 is subject to Phosphoserine. Residues 770–788 (SPEAEPTDSDSPPSSSADA) show a composition bias toward low complexity. Threonine 776 bears the Phosphothreonine mark. Serine 783 is modified (phosphoserine). Phosphothreonine is present on threonine 794. 3 disordered regions span residues 801–860 (KEAE…VQQD), 913–1035 (CLLG…DLLG), and 1047–1150 (AVAP…PNYA). Residues serine 811, serine 826, serine 829, serine 834, and serine 939 each carry the phosphoserine modification. 2 stretches are compositionally biased toward low complexity: residues 925-939 (PPEDLLSEDPLLLAS) and 950-966 (PRGGPPAAADPFGPLLP). Polar residues-rich tracts occupy residues 967–976 (SSGNNSQPCS) and 1070–1080 (SQASWTKSQNP). Position 1096 is a phosphoserine (serine 1096). The span at 1109 to 1124 (TATTPKGSSSWQTSRP) shows a compositional bias: polar residues. Arginine 1123 is subject to Omega-N-methylarginine. A phosphoserine mark is found at serine 1176 and serine 1185. Residues 1247–1311 (SRWTPVGMAD…FENQGSRPLF (65 aa)) enclose the J domain.

The protein belongs to the protein kinase superfamily. Ser/Thr protein kinase family. In terms of tissue distribution, ubiquitous. Highest in testis.

Its subcellular location is the cytoplasm. The protein localises to the perinuclear region. The protein resides in the golgi apparatus. It is found in the trans-Golgi network. It localises to the cell junction. Its subcellular location is the focal adhesion. The protein localises to the cytoplasmic vesicle. The protein resides in the clathrin-coated vesicle. It carries out the reaction L-seryl-[protein] + ATP = O-phospho-L-seryl-[protein] + ADP + H(+). The catalysed reaction is L-threonyl-[protein] + ATP = O-phospho-L-threonyl-[protein] + ADP + H(+). Its function is as follows. Associates with cyclin G and CDK5. Seems to act as an auxilin homolog that is involved in the uncoating of clathrin-coated vesicles by Hsc70 in non-neuronal cells. Expression oscillates slightly during the cell cycle, peaking at G1. May play a role in clathrin-mediated endocytosis and intracellular trafficking, and in the dynamics of clathrin assembly/disassembly. The protein is Cyclin-G-associated kinase of Homo sapiens (Human).